A 141-amino-acid chain; its full sequence is Large ribosomal subunit protein uL11 (141 aa).

This sequence belongs to the universal ribosomal protein uL11 family. In terms of assembly, part of the ribosomal stalk of the 50S ribosomal subunit. Interacts with L10 and the large rRNA to form the base of the stalk. L10 forms an elongated spine to which L12 dimers bind in a sequential fashion forming a multimeric L10(L12)X complex. Post-translationally, one or more lysine residues are methylated.

Forms part of the ribosomal stalk which helps the ribosome interact with GTP-bound translation factors. The chain is Large ribosomal subunit protein uL11 from Brevibacillus brevis (strain 47 / JCM 6285 / NBRC 100599).